The primary structure comprises 326 residues: Immune-associated nucleotide-binding protein 4 (326 aa).

Residues 17–225 (EPIKNIVLVG…FTDEMHRKIQ (209 aa)) form the AIG1-type G domain. Residues 26 to 33 (GRTGNGKS) are G1. GTP-binding positions include 26-34 (GRTGNGKSA) and serine 47. The G2 stretch occupies residues 53-57 (GVTMK). Residues 75–78 (DTPG) are G3. The tract at residues 145 to 148 (TGGD) is G4. The G5 stretch occupies residues 184–186 (DNR). Asparagine 185 serves as a coordination point for GTP. Positions 217-241 (TDEMHRKIQKEAETLREQQKEVESK) form a coiled coil.

This sequence belongs to the TRAFAC class TrmE-Era-EngA-EngB-Septin-like GTPase superfamily. AIG1/Toc34/Toc159-like paraseptin GTPase family. IAN subfamily. In terms of tissue distribution, expressed in radicles of the germinating seeds.

This is Immune-associated nucleotide-binding protein 4 from Arabidopsis thaliana (Mouse-ear cress).